The chain runs to 604 residues: MKEKTPTPMKNIRNFSIIAHIDHGKSTLADCLIAECNAISNREMKSQVMDTMDIEKERGITIKAQSVRLNYTFKGEDYVLNLIDTPGHVDFSYEVSRSLCSCEGALLVVDATQGVEAQTIANTYIALDNNLEILPVINKIDLPNANVLEVKQDIEDTIGIDWFNANEVSAKAKLGIKDLLEKIITTIPAPSGDPNNPLKALIYDSWFDNYLGALALVRIMDGSINTEQEILVMGTGKKHGVLGLYYPNPLKKIPTKSLECGEIGIVSLGLKSVTDIAVGDTLTDAENPTSKPIEGFMPAKPFVFAGLYPIETDRFEDLREALLKLQLNDCALNFEPESSVALGFGFRVGFLGLLHMEVIKERLEREFSLNLIATAPTVVYEVHLTDNSIKYVQNPSELPPENHIACIKEPFVRATIITPSEFLGNLMQLLNNKRGIQEKMEYLNQSRVMLTYSLPSNEIVMDFYDKLKSCTKGYASFDYEPIENREANLVKLDVRVAGDVVDALSIIIDKNKAYEKGRALVETMKELIPRQLFEVAIQASVGNKIIARETIKSVGKNVTAKCYGGDITRKRKLLEKQKEGKKRMKAIGKVELPQEAFLAILKID.

Positions 10 to 191 constitute a tr-type G domain; sequence KNIRNFSIIA…KIITTIPAPS (182 aa). Residues 22–27 and 138–141 contribute to the GTP site; these read DHGKST and NKID.

It belongs to the TRAFAC class translation factor GTPase superfamily. Classic translation factor GTPase family. LepA subfamily.

It is found in the cell inner membrane. It carries out the reaction GTP + H2O = GDP + phosphate + H(+). Required for accurate and efficient protein synthesis under certain stress conditions. May act as a fidelity factor of the translation reaction, by catalyzing a one-codon backward translocation of tRNAs on improperly translocated ribosomes. Back-translocation proceeds from a post-translocation (POST) complex to a pre-translocation (PRE) complex, thus giving elongation factor G a second chance to translocate the tRNAs correctly. Binds to ribosomes in a GTP-dependent manner. This Helicobacter pylori (strain J99 / ATCC 700824) (Campylobacter pylori J99) protein is Elongation factor 4.